Here is a 306-residue protein sequence, read N- to C-terminus: Aspartate carbamoyltransferase catalytic subunit (306 aa).

The carbamoyl phosphate site is built by Arg51 and Thr52. An L-aspartate-binding site is contributed by Lys79. Positions 101, 130, and 133 each coordinate carbamoyl phosphate. L-aspartate contacts are provided by Arg163 and Arg215. Residues Gly256 and Pro257 each contribute to the carbamoyl phosphate site.

Belongs to the aspartate/ornithine carbamoyltransferase superfamily. ATCase family. Heterododecamer (2C3:3R2) of six catalytic PyrB chains organized as two trimers (C3), and six regulatory PyrI chains organized as three dimers (R2).

The catalysed reaction is carbamoyl phosphate + L-aspartate = N-carbamoyl-L-aspartate + phosphate + H(+). The protein operates within pyrimidine metabolism; UMP biosynthesis via de novo pathway; (S)-dihydroorotate from bicarbonate: step 2/3. Its function is as follows. Catalyzes the condensation of carbamoyl phosphate and aspartate to form carbamoyl aspartate and inorganic phosphate, the committed step in the de novo pyrimidine nucleotide biosynthesis pathway. The protein is Aspartate carbamoyltransferase catalytic subunit of Ehrlichia ruminantium (strain Welgevonden).